Consider the following 498-residue polypeptide: Glycerol kinase (498 aa).

Thr-12 is an ADP binding site. ATP-binding residues include Thr-12, Thr-13, and Ser-14. Residue Thr-12 participates in sn-glycerol 3-phosphate binding. Arg-16 contributes to the ADP binding site. Residues Arg-82, Glu-83, and Tyr-134 each contribute to the sn-glycerol 3-phosphate site. Arg-82, Glu-83, and Tyr-134 together coordinate glycerol. Residue His-230 is modified to Phosphohistidine; by HPr. A sn-glycerol 3-phosphate-binding site is contributed by Asp-244. Glycerol contacts are provided by Asp-244 and Gln-245. Positions 266 and 309 each coordinate ADP. Positions 266, 309, 313, and 410 each coordinate ATP. Gly-410 and Asn-414 together coordinate ADP.

It belongs to the FGGY kinase family. As to quaternary structure, homotetramer and homodimer (in equilibrium). The phosphoenolpyruvate-dependent sugar phosphotransferase system (PTS), including enzyme I, and histidine-containing protein (HPr) are required for the phosphorylation, which leads to the activation of the enzyme.

It carries out the reaction glycerol + ATP = sn-glycerol 3-phosphate + ADP + H(+). The protein operates within polyol metabolism; glycerol degradation via glycerol kinase pathway; sn-glycerol 3-phosphate from glycerol: step 1/1. Activated by phosphorylation and inhibited by fructose 1,6-bisphosphate (FBP). Key enzyme in the regulation of glycerol uptake and metabolism. Catalyzes the phosphorylation of glycerol to yield sn-glycerol 3-phosphate. The chain is Glycerol kinase from Staphylococcus aureus (strain MW2).